We begin with the raw amino-acid sequence, 295 residues long: Ethanolamine ammonia-lyase small subunit (295 aa).

Residues valine 207, glutamate 228, and cysteine 258 each coordinate adenosylcob(III)alamin.

Belongs to the EutC family. As to quaternary structure, the basic unit is a heterodimer which dimerizes to form tetramers. The heterotetramers trimerize; 6 large subunits form a core ring with 6 small subunits projecting outwards. Adenosylcob(III)alamin serves as cofactor.

It localises to the bacterial microcompartment. The enzyme catalyses ethanolamine = acetaldehyde + NH4(+). It functions in the pathway amine and polyamine degradation; ethanolamine degradation. Its function is as follows. Catalyzes the deamination of various vicinal amino-alcohols to oxo compounds. Allows this organism to utilize ethanolamine as the sole source of nitrogen and carbon in the presence of external vitamin B12. This chain is Ethanolamine ammonia-lyase small subunit, found in Escherichia fergusonii (strain ATCC 35469 / DSM 13698 / CCUG 18766 / IAM 14443 / JCM 21226 / LMG 7866 / NBRC 102419 / NCTC 12128 / CDC 0568-73).